A 727-amino-acid polypeptide reads, in one-letter code: YTH domain-containing protein 1 (727 aa).

Positions 1-12 are enriched in basic and acidic residues; sequence MAADSREEKDGE. Residues 1 to 338 form a disordered region; it reads MAADSREEKD…KHEKLSSSVR (338 aa). Ser-35 carries the post-translational modification Phosphoserine. Positions 50-59 are enriched in basic and acidic residues; sequence DRMESTDTKR. Positions 63-90 are enriched in polar residues; sequence SVHSRQLVSKPLSSSVSNNKRIVSTKGK. A compositionally biased stretch (basic and acidic residues) spans 91–115; that stretch reads SATEYKNEEYQRSERNKRLDADRKI. Lys-96 participates in a covalent cross-link: Glycyl lysine isopeptide (Lys-Gly) (interchain with G-Cter in SUMO2). Residues Ser-118 and Ser-120 each carry the phosphoserine modification. Positions 124–144 are enriched in basic and acidic residues; sequence EPYKNQPEKTCVRKRDPERRA. Ser-146 is subject to Phosphoserine. Residue Thr-148 is modified to Phosphothreonine. 2 stretches are compositionally biased toward basic and acidic residues: residues 151-163 and 170-185; these read GSER…DRRA and SKEE…DHET. Residues 199-254 are compositionally biased toward acidic residues; sequence ENEEEGVEEDVEEDEEVEEDAEEDEEVDEDGEEEEEEEEEEEEEEEEEEEEYEQDE. Positions 255-270 are enriched in basic and acidic residues; the sequence is RDQKEEGNDYDTRSEA. Residues 280-289 show a composition bias toward polar residues; the sequence is FTDGSVRSGS. Phosphoserine is present on residues Ser-308, Ser-315, Ser-317, Ser-318, and Ser-320. Residues 315 to 325 are compositionally biased toward low complexity; the sequence is SGSSASESYAG. The region spanning 355–492 is the YTH domain; that stretch reads ARFFLIKSNN…ECGTQLCLLF (138 aa). RNA is bound by residues 361–363 and 377–378; these read KSN and WS. Position 424 is a phosphoserine (Ser-424). Position 428 (Trp-428) interacts with RNA. Ser-435 carries the phosphoserine modification. Asp-476 contacts RNA. Residues 508–523 are compositionally biased toward basic residues; the sequence is RHKRRMHSQPRSRGRP. Disordered regions lie at residues 508-564, 607-643, and 669-727; these read RHKR…PGYL, GMPP…HPVP, and AVVS…RYRR. Positions 524 to 564 are enriched in basic and acidic residues; it reads SRREPVRDVGRRRPEDYDIHNSRKKPRIDYPPEFHQRPGYL. Ser-545 is subject to Phosphoserine. Residues 679–727 show a composition bias toward basic and acidic residues; it reads RERDRERERDRPRDNRRDRERDRGRDRERERERLCDRDRDRGERGRYRR.

Interacts with SRSF1. Interacts with SRSF2. Interacts with SRSF3. Interacts with SRSF7. Interacts with SRSF10. Interacts with CPSF6. Interacts with KHDRBS1/SAM68. Interacts with TRA2B. Interacts with KHDRBS3. Interacts with EMD. Interacts with RBMX. Interacts with ZCCHC8. In terms of processing, tyrosine phosphorylated.

Its subcellular location is the nucleus. The protein resides in the nucleus speckle. In terms of biological role, regulator of alternative splicing that specifically recognizes and binds N6-methyladenosine (m6A)-containing RNAs. M6A is a modification present at internal sites of mRNAs and some non-coding RNAs and plays a role in the efficiency of mRNA splicing, processing and stability. Acts as a key regulator of exon-inclusion or exon-skipping during alternative splicing via interaction with mRNA splicing factors SRSF3 and SRSF10. Specifically binds m6A-containing mRNAs and promotes recruitment of SRSF3 to its mRNA-binding elements adjacent to m6A sites, leading to exon-inclusion during alternative splicing. In contrast, interaction with SRSF3 prevents interaction with SRSF10, a splicing factor that promotes exon skipping: this prevents SRSF10 from binding to its mRNA-binding sites close to m6A-containing regions, leading to inhibit exon skipping during alternative splicing. May also regulate alternative splice site selection. Also involved in nuclear export of m6A-containing mRNAs via interaction with SRSF3: interaction with SRSF3 facilitates m6A-containing mRNA-binding to both SRSF3 and NXF1, promoting mRNA nuclear export. Involved in S-adenosyl-L-methionine homeostasis by regulating expression of MAT2A transcripts, probably by binding m6A-containing MAT2A mRNAs. Also recognizes and binds m6A on other RNA molecules. Involved in random X inactivation mediated by Xist RNA: recognizes and binds m6A-containing Xist and promotes transcription repression activity of Xist. Also recognizes and binds m6A-containing single-stranded DNA. Involved in germline development: required for spermatogonial development in males and oocyte growth and maturation in females, probably via its role in alternative splicing. The sequence is that of YTH domain-containing protein 1 from Homo sapiens (Human).